A 276-amino-acid polypeptide reads, in one-letter code: MKKWIVLALTVTFWGLAFTAIKYSVRFLSPIAIASLRFAIANTLFAVIIILGKRIKWKDLPKVFALGIFGVSVYHVFLNLGEVYISSGVASVVISLAPIFVLILSAIFLRERITYSKVVGIIIAFLGVVVISEPSYANIYGIALVMVSTVAAAIYTTFGKSLLSKYNPITLTSNAMVLGSIPLYPFLPDSIRSLGGDLNLIGSIVFLGIFSTFFGYLGWYYFLEKEEASRASVFLLAIPVVSLLAGNILLAEPLTLRTVAGSGLVLLGIYIVVRKR.

10 consecutive transmembrane segments (helical) span residues 5 to 25 (IVLA…KYSV), 31 to 51 (IAIA…IIIL), 63 to 83 (VFAL…LGEV), 89 to 109 (VASV…AIFL), 119 to 139 (VGII…YANI), 142 to 162 (IALV…GKSL), 168 to 188 (PITL…PFLP), 200 to 220 (LIGS…LGWY), 231 to 251 (ASVF…ILLA), and 253 to 273 (PLTL…YIVV). 2 EamA domains span residues 12 to 133 (TFWG…VISE) and 150 to 274 (VAAA…IVVR).

It belongs to the EamA transporter family.

The protein resides in the cell membrane. This is an uncharacterized protein from Archaeoglobus fulgidus (strain ATCC 49558 / DSM 4304 / JCM 9628 / NBRC 100126 / VC-16).